The sequence spans 916 residues: Dual serine/threonine and tyrosine protein kinase (916 aa).

Over residues 1–19 (MQRDGTRSARRMDEGDRRT) the composition is skewed to basic and acidic residues. The disordered stretch occupies residues 1–27 (MQRDGTRSARRMDEGDRRTGSAGRSGS). In terms of domain architecture, Protein kinase spans 641–895 (PRIGRELGRG…PLMGIVQPML (255 aa)). Residues 647-655 (LGRGQYGVV) and Lys-670 contribute to the ATP site. Residue Asp-766 is the Proton acceptor of the active site.

This sequence belongs to the protein kinase superfamily. Ser/Thr protein kinase family.

It localises to the cytoplasm. Its subcellular location is the cell membrane. The protein resides in the apical cell membrane. It is found in the basolateral cell membrane. The protein localises to the cell junction. It catalyses the reaction L-seryl-[protein] + ATP = O-phospho-L-seryl-[protein] + ADP + H(+). The catalysed reaction is L-threonyl-[protein] + ATP = O-phospho-L-threonyl-[protein] + ADP + H(+). It carries out the reaction L-tyrosyl-[protein] + ATP = O-phospho-L-tyrosyl-[protein] + ADP + H(+). In terms of biological role, may act as a positive regulator of ERK phosphorylation downstream of fibroblast growth factor-receptor activation. May induce both caspase-dependent apoptosis and caspase-independent cell death. May play a role in the embryonic development. The protein is Dual serine/threonine and tyrosine protein kinase (dstyk) of Xenopus laevis (African clawed frog).